Consider the following 213-residue polypeptide: Major fimbrial subunit (213 aa).

Residues 1–20 (MKKTLLGSLILLAFAGNVQA) form the signal peptide. C41 and C81 form a disulfide bridge.

Belongs to the fimbrial protein family.

The protein localises to the fimbrium. Functionally, mediates adherence to oropharyngeal epithelial cells. Helps the airway colonization process. In Haemophilus influenzae, this protein is Major fimbrial subunit (hifA).